Consider the following 348-residue polypeptide: Ion-translocating oxidoreductase complex subunit D (348 aa).

5 helical membrane passes run 15–35 (LTAK…GMQA), 36–56 (YFFG…AVAI), 67–87 (LTAF…LAMS), 88–108 (IPPY…LLLA), and 125–145 (VAYA…LVPI). The residue at position 186 (threonine 186) is an FMN phosphoryl threonine. 5 helical membrane passes run 212–232 (LFAN…LLLI), 241–261 (IPAA…LLLP), 265–285 (LNVV…FIAT), 298–318 (LIFG…GNYP), and 320–340 (AVAF…HYTQ).

This sequence belongs to the NqrB/RnfD family. The complex is composed of six subunits: RnfA, RnfB, RnfC, RnfD, RnfE and RnfG. Requires FMN as cofactor.

Its subcellular location is the cell inner membrane. In terms of biological role, part of a membrane-bound complex that couples electron transfer with translocation of ions across the membrane. This chain is Ion-translocating oxidoreductase complex subunit D, found in Actinobacillus pleuropneumoniae serotype 7 (strain AP76).